Here is a 1207-residue protein sequence, read N- to C-terminus: Brassinosteroid LRR receptor kinase (1207 aa).

The signal sequence occupies residues 1 to 34 (MKAHKTVFNQHPLSLNKLFFVLLLIFFLPPASPA). The Cys pair 1 motif lies at 71-78 (CSFTGVSC). 20 LRR repeats span residues 109 to 131 (NLES…AKSQ), 135 to 157 (TLDS…SSFG), 161 to 181 (NLKS…EMLK), 186 to 207 (SLQV…PWVS), 213 to 234 (ELEF…LDFK), 235 to 257 (NLSY…KDCS), 258 to 280 (NLQH…LSSC), 282 to 304 (KLSF…PSES), 305 to 325 (LQYL…QLAD), 329 to 350 (TVVE…SLGE), 353 to 374 (SLEL…DTLS), 378 to 400 (NIKT…FSNL), 402 to 423 (KLET…GICK), 428 to 450 (NLKV…LSNC), 452 to 474 (QLVS…LGSL), 476 to 499 (KLKD…MYLQ), 500 to 523 (ALEN…SNCT), 524 to 547 (KLNW…GRLS), 548 to 570 (NLAI…LGNC), and 572 to 594 (SLIW…LFKQ). A glycan (N-linked (GlcNAc...) asparagine) is linked at N119. Residues N166 and N196 are each glycosylated (N-linked (GlcNAc...) asparagine). 2 N-linked (GlcNAc...) asparagine glycosylation sites follow: N235 and N245. N287 carries an N-linked (GlcNAc...) asparagine glycan. N-linked (GlcNAc...) asparagine glycans are attached at residues N339 and N363. N-linked (GlcNAc...) asparagine glycans are attached at residues N412 and N449. N521 carries an N-linked (GlcNAc...) asparagine glycan. N-linked (GlcNAc...) asparagine glycosylation is found at N556, N584, N646, and N662. LRR repeat units follow at residues 664-686 (SMIF…LGAM), 688-711 (YLSI…GGLK), 712-735 (NVAI…TSLT), and 736-758 (LLGE…APFD). Residues N724, N746, and N767 are each glycosylated (N-linked (GlcNAc...) asparagine). The Cys pair 2 signature appears at 771 to 779 (CGYPLPIPC). A helical membrane pass occupies residues 803–823 (SVAMGLLFSLFCIFGLIIVAI). In terms of domain architecture, Protein kinase spans 888 to 1163 (FHNDSLVGSG…IQVMAMFKEI (276 aa)). Residues 894–902 (VGSGGFGDV) and K916 each bind ATP. Catalysis depends on D1014, which acts as the Proton acceptor.

It belongs to the protein kinase superfamily. Ser/Thr protein kinase family.

Its subcellular location is the cell membrane. The enzyme catalyses L-seryl-[protein] + ATP = O-phospho-L-seryl-[protein] + ADP + H(+). It carries out the reaction L-threonyl-[protein] + ATP = O-phospho-L-threonyl-[protein] + ADP + H(+). In terms of biological role, receptor with a serine/threonine-protein kinase activity. Regulates, in response to brassinosteroid binding, a signaling cascade involved in plant development, including expression of light- and stress-regulated genes, promotion of cell elongation, normal leaf and chloroplast senescence, and flowering. May be involved in a feedback regulation of brassinosteroid biosynthesis. May be also involved in the perception of systemin, a peptide hormone responsible for the systemic activation of defense genes in leaves of wounded plants. In Solanum lycopersicum (Tomato), this protein is Brassinosteroid LRR receptor kinase (CURL3).